The sequence spans 941 residues: Isoleucine--tRNA ligase (941 aa).

Residues Pro58 to His68 carry the 'HIGH' region motif. Glu562 provides a ligand contact to L-isoleucyl-5'-AMP. The 'KMSKS' region signature appears at Lys603–Ser607. An ATP-binding site is contributed by Lys606. Cys904, Cys907, Cys924, and Cys927 together coordinate Zn(2+).

The protein belongs to the class-I aminoacyl-tRNA synthetase family. IleS type 1 subfamily. In terms of assembly, monomer. Zn(2+) is required as a cofactor.

The protein localises to the cytoplasm. It catalyses the reaction tRNA(Ile) + L-isoleucine + ATP = L-isoleucyl-tRNA(Ile) + AMP + diphosphate. Its function is as follows. Catalyzes the attachment of isoleucine to tRNA(Ile). As IleRS can inadvertently accommodate and process structurally similar amino acids such as valine, to avoid such errors it has two additional distinct tRNA(Ile)-dependent editing activities. One activity is designated as 'pretransfer' editing and involves the hydrolysis of activated Val-AMP. The other activity is designated 'posttransfer' editing and involves deacylation of mischarged Val-tRNA(Ile). This chain is Isoleucine--tRNA ligase, found in Alkalilimnicola ehrlichii (strain ATCC BAA-1101 / DSM 17681 / MLHE-1).